Reading from the N-terminus, the 279-residue chain is Acyl-[acyl-carrier-protein]--UDP-N-acetylglucosamine O-acyltransferase (279 aa).

It belongs to the transferase hexapeptide repeat family. LpxA subfamily. Homotrimer.

It localises to the cytoplasm. It catalyses the reaction a (3R)-hydroxyacyl-[ACP] + UDP-N-acetyl-alpha-D-glucosamine = a UDP-3-O-[(3R)-3-hydroxyacyl]-N-acetyl-alpha-D-glucosamine + holo-[ACP]. It participates in glycolipid biosynthesis; lipid IV(A) biosynthesis; lipid IV(A) from (3R)-3-hydroxytetradecanoyl-[acyl-carrier-protein] and UDP-N-acetyl-alpha-D-glucosamine: step 1/6. Its function is as follows. Involved in the biosynthesis of lipid A, a phosphorylated glycolipid that anchors the lipopolysaccharide to the outer membrane of the cell. The sequence is that of Acyl-[acyl-carrier-protein]--UDP-N-acetylglucosamine O-acyltransferase from Chlamydia pneumoniae (Chlamydophila pneumoniae).